The chain runs to 1426 residues: Phospholipid-transporting ATPase VD (1426 aa).

At 1–97 (MTEALQWARY…PRNLFEQFHR (97 aa)) the chain is on the cytoplasmic side. Residues 98–118 (AANLYFLFLVVLNWVPLVEAF) form a helical membrane-spanning segment. The Exoplasmic loop segment spans residues 119 to 121 (QKE). The helical transmembrane segment at 122–142 (ITMLPLVVVLTIIAIKDGLED) threads the bilayer. Residues 143–321 (YRKYKIDKQI…SKLERRANTD (179 aa)) lie on the Cytoplasmic side of the membrane. Residues 322–342 (VLWCVMLLVIMCLTGAVGHGI) form a helical membrane-spanning segment. The Exoplasmic loop segment spans residues 343 to 365 (WLSRYEKMHFFNVPEPDGHIISP). The chain crosses the membrane as a helical span at residues 366 to 386 (LLAGFYMFWTMIILLQVLIPI). Topologically, residues 387-1113 (SLYVSIEIVK…HWCYTRLSNM (727 aa)) are cytoplasmic. The active-site 4-aspartylphosphate intermediate is Asp438. Residues Asp438, Lys439, and Thr440 each coordinate ATP. Residue Asp438 coordinates Mg(2+). A Mg(2+)-binding site is contributed by Thr440. Residues 506–531 (NGPLGNKPSNHLAGSSFTLGSGEGAS) form a disordered region. Positions 512 to 524 (KPSNHLAGSSFTL) are enriched in polar residues. ATP-binding positions include Glu730, Phe772, Lys796, Arg840, Thr920, Gly921, Asp922, 996-1003 (GLIITGKT), Arg1030, and Lys1036. Asp1056 serves as a coordination point for Mg(2+). ATP is bound by residues Asn1059 and Asp1060. Mg(2+) is bound at residue Asp1060. A helical transmembrane segment spans residues 1114–1134 (ILYFFYKNVAYVNLLFWYQFF). At 1135-1145 (CGFSGTSMTDY) the chain is on the exoplasmic loop side. Residues 1146 to 1166 (WVLIFFNLLFTSAPPVIYGVL) traverse the membrane as a helical segment. The Cytoplasmic portion of the chain corresponds to 1167–1195 (EKDVSAETLMQLPELYRSGQKSEAYLPHT). Residues 1196 to 1216 (FWITLLDAFYQSLVCFFVPYF) form a helical membrane-spanning segment. Residues 1217-1224 (TYQGSDTD) are Exoplasmic loop-facing. The helical transmembrane segment at 1225–1245 (IFAFGNPLNTAALFIVLLHLV) threads the bilayer. Residues 1246-1252 (IESKSLT) are Cytoplasmic-facing. A helical membrane pass occupies residues 1253–1273 (WIHLLVIIGSILSYFLFAIVF). Residues 1274–1292 (GAMCVTCNPPSNPYWIMQE) are Exoplasmic loop-facing. Residues 1293-1313 (HMLDPVFYLVCILTTSIALLP) form a helical membrane-spanning segment. Residues 1314–1426 (RFVYRVLQGS…MAGPSKGKES (113 aa)) lie on the Cytoplasmic side of the membrane. 1364–1371 (ANQSAGKS) lines the ATP pocket.

It belongs to the cation transport ATPase (P-type) (TC 3.A.3) family. Type IV subfamily. Component of a P4-ATPase flippase complex which consists of a catalytic alpha subunit ATP10A and an accessory beta subunit TMEM30A. It depends on Mg(2+) as a cofactor. In terms of processing, autophosphorylated at the conserved aspartate of the P-type ATPase signature sequence. Expressed in placenta and, to a lesser extent, in kidney.

The protein resides in the cell membrane. The protein localises to the endoplasmic reticulum membrane. The enzyme catalyses ATP + H2O + phospholipidSide 1 = ADP + phosphate + phospholipidSide 2.. It catalyses the reaction a beta-D-glucosyl-(1&lt;-&gt;1')-N-acylsphing-4-enine(out) + ATP + H2O = a beta-D-glucosyl-(1&lt;-&gt;1')-N-acylsphing-4-enine(in) + ADP + phosphate + H(+). Functionally, catalytic component of a P4-ATPase flippase complex, which catalyzes the hydrolysis of ATP coupled to the transport of glucosylceramide (GlcCer) from the outer to the inner leaflet of the plasma membrane. This is Phospholipid-transporting ATPase VD from Homo sapiens (Human).